A 443-amino-acid polypeptide reads, in one-letter code: Probable D-serine dehydratase (443 aa).

K118 is modified (N6-(pyridoxal phosphate)lysine).

Belongs to the serine/threonine dehydratase family. DsdA subfamily. The cofactor is pyridoxal 5'-phosphate.

The catalysed reaction is D-serine = pyruvate + NH4(+). The chain is Probable D-serine dehydratase from Aeromonas salmonicida (strain A449).